Consider the following 167-residue polypeptide: Ribosome maturation factor RimM (167 aa).

The PRC barrel domain maps to D94–F166.

Belongs to the RimM family. In terms of assembly, binds ribosomal protein uS19.

It is found in the cytoplasm. Its function is as follows. An accessory protein needed during the final step in the assembly of 30S ribosomal subunit, possibly for assembly of the head region. Essential for efficient processing of 16S rRNA. May be needed both before and after RbfA during the maturation of 16S rRNA. It has affinity for free ribosomal 30S subunits but not for 70S ribosomes. This chain is Ribosome maturation factor RimM, found in Chlorobium luteolum (strain DSM 273 / BCRC 81028 / 2530) (Pelodictyon luteolum).